We begin with the raw amino-acid sequence, 249 residues long: Galactan endo-beta-1,3-galactanase (249 aa).

The first 21 residues, 1-21 (MKLFVVLACLAAPGTFPFVDA), serve as a signal peptide directing secretion. The 214-residue stretch at 34–247 (STYWNNFYPW…KARNVQVTRT (214 aa)) folds into the GH16 domain. Residue N48 is glycosylated (N-linked (GlcNAc...) asparagine). The Nucleophile role is filled by E138. E143 functions as the Proton donor in the catalytic mechanism. N156 is a glycosylation site (N-linked (GlcNAc...) asparagine).

This sequence belongs to the glycosyl hydrolase 16 family. N-glycosylated.

It catalyses the reaction The enzyme specifically hydrolyzes beta-1,3-galactan and beta-1,3-galactooligosaccharides.. Functionally, specifically hydrolyzes beta-1,3-galactan in an endo-fashion. Requires at least 3 contiguous beta-1,3-residues. The sequence is that of Galactan endo-beta-1,3-galactanase (EN3GAL) from Flammulina velutipes (Agaricus velutipes).